The primary structure comprises 175 residues: Probable S-adenosyl-L-methionine-binding protein VirR (175 aa).

The 131-residue stretch at 35–165 folds into the TsaA-like domain; the sequence is LFFVGKIRTP…DRSLSKPLAP (131 aa). S-adenosyl-L-methionine is bound by residues 52 to 54, 90 to 91, Arg-114, Thr-124, and 145 to 148; these read PRQ, HE, and LDGT.

The protein belongs to the tRNA methyltransferase O family.

In Rhizobium radiobacter (Agrobacterium tumefaciens), this protein is Probable S-adenosyl-L-methionine-binding protein VirR (virR).